Here is a 98-residue protein sequence, read N- to C-terminus: ESAT-6-like protein EsxM (98 aa).

It belongs to the WXG100 family. CFP-10 subfamily.

The protein localises to the secreted. Functionally, alters the host macrophage cytoskeleton and enhances macrophage motility. Promotes granuloma efflux, extrapulmonary dissemination of infection and bone disease. The sequence is that of ESAT-6-like protein EsxM from Mycobacterium marinum (strain ATCC BAA-535 / M).